Consider the following 226-residue polypeptide: Protein FMP52-1, mitochondrial (226 aa).

Residues 1 to 43 (MSAFVLGSTGLVGLQILKVLDSSTAFKKVSTVSRRLPSVTSGK) constitute a mitochondrion transit peptide.

This sequence belongs to the FMP52 family.

The protein resides in the mitochondrion outer membrane. The sequence is that of Protein FMP52-1, mitochondrial (FMP521) from Scheffersomyces stipitis (strain ATCC 58785 / CBS 6054 / NBRC 10063 / NRRL Y-11545) (Yeast).